The following is a 418-amino-acid chain: Light-independent protochlorophyllide reductase subunit N (418 aa).

Positions 17, 42, and 103 each coordinate [4Fe-4S] cluster.

Belongs to the BchN/ChlN family. Protochlorophyllide reductase is composed of three subunits; ChlL, ChlN and ChlB. Forms a heterotetramer of two ChlB and two ChlN subunits. It depends on [4Fe-4S] cluster as a cofactor.

It carries out the reaction chlorophyllide a + oxidized 2[4Fe-4S]-[ferredoxin] + 2 ADP + 2 phosphate = protochlorophyllide a + reduced 2[4Fe-4S]-[ferredoxin] + 2 ATP + 2 H2O. It participates in porphyrin-containing compound metabolism; chlorophyll biosynthesis (light-independent). In terms of biological role, component of the dark-operative protochlorophyllide reductase (DPOR) that uses Mg-ATP and reduced ferredoxin to reduce ring D of protochlorophyllide (Pchlide) to form chlorophyllide a (Chlide). This reaction is light-independent. The NB-protein (ChlN-ChlB) is the catalytic component of the complex. In Prochlorococcus marinus (strain SARG / CCMP1375 / SS120), this protein is Light-independent protochlorophyllide reductase subunit N.